The primary structure comprises 270 residues: 4-hydroxy-tetrahydrodipicolinate reductase (270 aa).

NAD(+) contacts are provided by residues 8-13, aspartate 34, 102-104, and 128-131; these read GALGRM, GTT, and SQNY. Histidine 160 acts as the Proton donor/acceptor in catalysis. Histidine 161 is a binding site for (S)-2,3,4,5-tetrahydrodipicolinate. The active-site Proton donor is lysine 164. 170-171 contributes to the (S)-2,3,4,5-tetrahydrodipicolinate binding site; sequence GT.

This sequence belongs to the DapB family.

Its subcellular location is the cytoplasm. The catalysed reaction is (S)-2,3,4,5-tetrahydrodipicolinate + NAD(+) + H2O = (2S,4S)-4-hydroxy-2,3,4,5-tetrahydrodipicolinate + NADH + H(+). The enzyme catalyses (S)-2,3,4,5-tetrahydrodipicolinate + NADP(+) + H2O = (2S,4S)-4-hydroxy-2,3,4,5-tetrahydrodipicolinate + NADPH + H(+). It participates in amino-acid biosynthesis; L-lysine biosynthesis via DAP pathway; (S)-tetrahydrodipicolinate from L-aspartate: step 4/4. Functionally, catalyzes the conversion of 4-hydroxy-tetrahydrodipicolinate (HTPA) to tetrahydrodipicolinate. This Methanococcus maripaludis (strain C7 / ATCC BAA-1331) protein is 4-hydroxy-tetrahydrodipicolinate reductase.